A 486-amino-acid chain; its full sequence is Probable glycine dehydrogenase (decarboxylating) subunit 2 (486 aa).

Residues 1-26 (MLIFESSRPGRQARAQAPKPTAATND) are disordered. Residue Lys-264 is modified to N6-(pyridoxal phosphate)lysine.

Belongs to the GcvP family. C-terminal subunit subfamily. As to quaternary structure, the glycine cleavage system is composed of four proteins: P, T, L and H. In this organism, the P 'protein' is a heterodimer of two subunits. Pyridoxal 5'-phosphate is required as a cofactor.

It carries out the reaction N(6)-[(R)-lipoyl]-L-lysyl-[glycine-cleavage complex H protein] + glycine + H(+) = N(6)-[(R)-S(8)-aminomethyldihydrolipoyl]-L-lysyl-[glycine-cleavage complex H protein] + CO2. Its function is as follows. The glycine cleavage system catalyzes the degradation of glycine. The P protein binds the alpha-amino group of glycine through its pyridoxal phosphate cofactor; CO(2) is released and the remaining methylamine moiety is then transferred to the lipoamide cofactor of the H protein. This Nitrosococcus oceani (strain ATCC 19707 / BCRC 17464 / JCM 30415 / NCIMB 11848 / C-107) protein is Probable glycine dehydrogenase (decarboxylating) subunit 2.